We begin with the raw amino-acid sequence, 380 residues long: MGIKGLTKLLADNAPKAMKEQKFESYFGRKIAIDASMSIYQFLIVVGRTGMETLTNEAGEVTSHLQGMFNRTIRLLEAGIKPVYVFDGKPPDMKKEELAKRFSKREDATNDLKEAVEAGDKDAVEKLSKRTVKVTAQHNDDCKRLLRLMGVPVVEAPSEAEAECAALCKNDKVFAVASEDMDSLTFGAPRFLRHLMDPSSKKIPVMEFDVAKVLEELELTMDQFIDLCILCGCDYCDSIKGIGGQTALKLIRQHGSIESILENLNKDRYQIPEDWPYQEARRLFKEPNVTLDVPELKWTPPDEEGLISFLVKDNGFNEDRVTKAIEKIKSAKNKSSQGRLESFFKPVATTSAPLKRKETSDKTSKAAAANKKTKAGGKKK.

The tract at residues 1-105 (MGIKGLTKLL…EELAKRFSKR (105 aa)) is N-domain. Position 34 (D34) interacts with Mg(2+). Residue R71 participates in DNA binding. Residues D87, E159, E161, D180, and D182 each coordinate Mg(2+). The segment at 123–254 (AVEKLSKRTV…QTALKLIRQH (132 aa)) is I-domain. Residue E159 participates in DNA binding. G232 and D234 together coordinate DNA. D234 serves as a coordination point for Mg(2+). The tract at residues 336-344 (SQGRLESFF) is interaction with PCNA. Residues 351–380 (SAPLKRKETSDKTSKAAAANKKTKAGGKKK) are disordered. The span at 355–364 (KRKETSDKTS) shows a compositional bias: basic and acidic residues. Basic residues predominate over residues 371-380 (KKTKAGGKKK).

This sequence belongs to the XPG/RAD2 endonuclease family. FEN1 subfamily. Interacts with PCNA. Three molecules of FEN1 bind to one PCNA trimer with each molecule binding to one PCNA monomer. PCNA stimulates the nuclease activity without altering cleavage specificity. Mg(2+) is required as a cofactor. In terms of processing, phosphorylated. Phosphorylation upon DNA damage induces relocalization to the nuclear plasma.

The protein resides in the nucleus. It localises to the nucleolus. Its subcellular location is the nucleoplasm. It is found in the mitochondrion. Functionally, structure-specific nuclease with 5'-flap endonuclease and 5'-3' exonuclease activities involved in DNA replication and repair. During DNA replication, cleaves the 5'-overhanging flap structure that is generated by displacement synthesis when DNA polymerase encounters the 5'-end of a downstream Okazaki fragment. It enters the flap from the 5'-end and then tracks to cleave the flap base, leaving a nick for ligation. Also involved in the long patch base excision repair (LP-BER) pathway, by cleaving within the apurinic/apyrimidinic (AP) site-terminated flap. Acts as a genome stabilization factor that prevents flaps from equilibrating into structures that lead to duplications and deletions. Also possesses 5'-3' exonuclease activity on nicked or gapped double-stranded DNA, and exhibits RNase H activity. Also involved in replication and repair of rDNA and in repairing mitochondrial DNA. This is Flap endonuclease 1-A from Sorghum bicolor (Sorghum).